A 434-amino-acid polypeptide reads, in one-letter code: MKMKAKWLPIAAAVTAALASQAAFAVDFHGYFRSGVGVSSDGDMQTLSKQKVGRLGNEDDTYGEVQLGQEVFNKDGKTFYVDSMFAMIPNGSNDWEGTGSVCNFDEKQCSGDSEFALRQFNVQAKGLLGFAPEATLWAGKRYYQRHDIHISDFYYWNISGAGAGIEGVQAGPGKISFAWVRNDRGWDGKDGWTKFEGMDVNTLDLRYAGIPLWQDASLEVGVDYAIANPTDAQKDSSNVQYKNAKDGVMLTAELTQGIFGGFNKTVLQYGTEGYSKTMAFYGDGSWYGAEAKDGADGFRIINHGVIPMGNSWEMGHQLVYGVGNDMWDGNDKWETMSVVARPMYKWDDFNKTIFEGGYFKDKNKSTNGSSLEDSGYKLTLSQTWSAGSSFWARPEIRVFTSYAALDDNDMAGTPYNSKTSKDTWNFGVQAEAWW.

A signal peptide spans Met-1–Ala-25.

Belongs to the porin LamB (TC 1.B.3) family. As to quaternary structure, homotrimer formed of three 18-stranded antiparallel beta-barrels, containing three independent channels.

Its subcellular location is the cell outer membrane. It catalyses the reaction beta-maltose(in) = beta-maltose(out). In terms of biological role, involved in the transport of maltose and maltodextrins. This is Maltoporin from Aeromonas hydrophila.